The primary structure comprises 60 residues: Large ribosomal subunit protein bL32 (60 aa).

The protein belongs to the bacterial ribosomal protein bL32 family.

This is Large ribosomal subunit protein bL32 from Fervidobacterium nodosum (strain ATCC 35602 / DSM 5306 / Rt17-B1).